The following is a 159-amino-acid chain: SsrA-binding protein (159 aa).

Positions 137 to 147 are enriched in basic and acidic residues; sequence LAERQANRETE. Residues 137–159 form a disordered region; sequence LAERQANRETEQAVGRRLKGMHD.

It belongs to the SmpB family.

The protein resides in the cytoplasm. Its function is as follows. Required for rescue of stalled ribosomes mediated by trans-translation. Binds to transfer-messenger RNA (tmRNA), required for stable association of tmRNA with ribosomes. tmRNA and SmpB together mimic tRNA shape, replacing the anticodon stem-loop with SmpB. tmRNA is encoded by the ssrA gene; the 2 termini fold to resemble tRNA(Ala) and it encodes a 'tag peptide', a short internal open reading frame. During trans-translation Ala-aminoacylated tmRNA acts like a tRNA, entering the A-site of stalled ribosomes, displacing the stalled mRNA. The ribosome then switches to translate the ORF on the tmRNA; the nascent peptide is terminated with the 'tag peptide' encoded by the tmRNA and targeted for degradation. The ribosome is freed to recommence translation, which seems to be the essential function of trans-translation. The sequence is that of SsrA-binding protein from Nocardioides sp. (strain ATCC BAA-499 / JS614).